The chain runs to 180 residues: Protein Flattop (180 aa).

The disordered stretch occupies residues 111–180 (PQISGKASGK…AGDKVLQAQS (70 aa)).

This sequence belongs to the Flattop family.

It localises to the cytoplasm. Its subcellular location is the cytoskeleton. It is found in the cilium basal body. The protein resides in the cell projection. The protein localises to the cilium. It localises to the apical cell membrane. Its subcellular location is the cilium axoneme. In terms of biological role, microtubule inner protein (MIP) part of the dynein-decorated doublet microtubules (DMTs) in cilia axoneme. Acts as a regulator of cilium basal body docking and positioning in mono- and multiciliated cells. Regulates basal body docking and cilia formation in multiciliated lung cells. Regulates kinocilium positioning and stereocilia bundle morphogenesis in the inner ear. The sequence is that of Protein Flattop from Xenopus laevis (African clawed frog).